A 626-amino-acid polypeptide reads, in one-letter code: DNA mismatch repair protein MutL (626 aa).

This sequence belongs to the DNA mismatch repair MutL/HexB family.

Functionally, this protein is involved in the repair of mismatches in DNA. It is required for dam-dependent methyl-directed DNA mismatch repair. May act as a 'molecular matchmaker', a protein that promotes the formation of a stable complex between two or more DNA-binding proteins in an ATP-dependent manner without itself being part of a final effector complex. The polypeptide is DNA mismatch repair protein MutL (Chlorobium luteolum (strain DSM 273 / BCRC 81028 / 2530) (Pelodictyon luteolum)).